Consider the following 97-residue polypeptide: Large ribosomal subunit protein uL23 (97 aa).

It belongs to the universal ribosomal protein uL23 family. Part of the 50S ribosomal subunit. Contacts protein L29, and trigger factor when it is bound to the ribosome.

One of the early assembly proteins it binds 23S rRNA. One of the proteins that surrounds the polypeptide exit tunnel on the outside of the ribosome. Forms the main docking site for trigger factor binding to the ribosome. This Agrobacterium fabrum (strain C58 / ATCC 33970) (Agrobacterium tumefaciens (strain C58)) protein is Large ribosomal subunit protein uL23.